The chain runs to 482 residues: E3 ubiquitin-protein ligase parkin (482 aa).

One can recognise a Ubiquitin-like domain in the interval 30-99 (LSIYVKTNTG…LGQQSVLHAI (70 aa)). S94 bears the Phosphoserine; by Pink1 mark. The segment at 157–246 (AHFFVHCSQC…SGGEKDFAAP (90 aa)) adopts an RING-type 0; atypical zinc-finger fold. Zn(2+) contacts are provided by C163, C166, C178, and C181. T187 carries the post-translational modification Phosphothreonine; by Pink1. C208, C232, H235, C259, C262, C274, H278, C281, C284, C310, C314, C353, C358, C373, C377, C382, C385, H390, C394, C436, and C439 together coordinate Zn(2+). The interval 255–482 (KNVPCLACTD…RDCMGAHWFG (228 aa)) is TRIAD supradomain. The RING-type 1 zinc-finger motif lies at 259-314 (CLACTDVSDTVLVFPCASQHVTCIDCFRHYCRSRLGERQFMPHPDFGYTLPCPAGC). IBR-type zinc fingers lie at residues 334 to 394 (DRYQ…IGEC) and 432 to 473 (STKP…EWTR). The segment at 436-467 (CPKCRTPTERDGGCMHMVCTRAGCGFEWCWVC) adopts an RING-type 2; atypical zinc-finger fold. C449 is an active-site residue. C454, C459, C464, C467, C475, and H479 together coordinate Zn(2+).

The protein belongs to the RBR family. Parkin subfamily. In terms of assembly, forms an E3 ubiquitin ligase complex with E2 ubiquitin-conjugating enzymes. Interacts with Pink1. Interacts with Marf. Interacts with Paris. Interacts with septins Septin1 and pnut. Auto-ubiquitinates in an E2-dependent manner leading to its own degradation. Post-translationally, phosphorylated. Activation requires phosphorylation at Ser-94 by Pink1 and binding to Pink1-phosphorylated polyubiquitin chains. Phosphorylation at Thr-187 by Pink1 is also important for mitochondrial localization. In oocytes, accumulates in early egg chambers where it is enriched until stages 9-10, localizing mainly to the posterior pole and anterior margin (at protein level). After stage 10 it is no longer detected in the oocyte (at protein level). In embryos, ubiquitously expressed in the early stages (stages 2 to 5) (at protein level). Expression levels decrease at later stages and becomes restricted to the brain and nerve cord from stage 9 (at protein level). Relatively higher levels of expression in the head compared to the body. Enriched in the dorsomedial (DM) dopaminergic neurons.

It is found in the mitochondrion. It localises to the cytoplasm. Its subcellular location is the cytosol. It catalyses the reaction [E2 ubiquitin-conjugating enzyme]-S-ubiquitinyl-L-cysteine + [acceptor protein]-L-lysine = [E2 ubiquitin-conjugating enzyme]-L-cysteine + [acceptor protein]-N(6)-ubiquitinyl-L-lysine.. It participates in protein modification; protein ubiquitination. Its activity is regulated as follows. In the autoinhibited state the side chain of Phe-481 inserts into a hydrophobic groove in RING-0, occluding the ubiquitin acceptor site Cys-449, whereas the REP repressor element binds RING-1 and blocks its E2-binding site. Activation of park requires 2 steps: (1) phosphorylation at Ser-94 by Pink1 and (2) binding to phosphorylated ubiquitin, leading to unlock repression of the catalytic Cys-449 by the RING-0 region via an allosteric mechanism and converting park to its fully-active form. According to another report, phosphorylation at Ser-94 by Pink1 is not essential for activation and only binding to phosphorylated ubiquitin is essential to unlock repression. E3 ubiquitin-protein ligase which accepts ubiquitin from E2 ubiquitin-conjugating enzymes in the form of a thioester and then directly transfers the ubiquitin to targeted substrates, such as Paris, Marf, Opa1, Miro, pnut, Septin1, Tom20 and porin. Mediates monoubiquitination as well as 'Lys-6', 'Lys-11', 'Lys-48'-linked and 'Lys-63'-linked polyubiquitination of substrates, depending on the context. Protects against mitochondrial dysfunction during cellular stress, by acting downstream of Pink1, to coordinate mitochondrial quality control mechanisms that remove and replace dysfunctional mitochondrial components. Depending on the severity of mitochondrial damage and/or dysfunction, activity ranges from preventing apoptosis and stimulating mitochondrial biogenesis to regulating mitochondrial dynamics and eliminating severely damaged mitochondria via mitophagy. Appears to be particularly important in maintaining the physiology and function of cells with high energy demands that are undergoing stress or altered metabolic environment, including spermatids, muscle cells and neurons such as the dopaminergic (DA) neurons. Activation and recruitment onto the outer membrane of damaged/dysfunctional mitochondria (OMM) requires Pink1-mediated phosphorylation of both park and ubiquitin. In depolarized mitochondria, mediates the decision between mitophagy or preventing apoptosis by inducing either the poly- or monoubiquitination of porin/VDAC; polyubiquitination of porin promotes mitophagy, while monoubiquitination of porin decreases mitochondrial calcium influx which ultimately inhibits apoptosis. When cellular stress results in irreversible mitochondrial damage, promotes the autophagic degradation of dysfunctional depolarized mitochondria (mitophagy) by promoting the ubiquitination of mitochondrial proteins. Preferentially assembles 'Lys-6'-, 'Lys-11'- and 'Lys-63'-linked polyubiquitin chains following mitochondrial damage, leading to mitophagy. In developing tissues, inhibits JNK-mediated apoptosis by negatively regulating bsk transcription. The Pink1-park pathway also promotes fission and/or inhibits fusion of damaged mitochondria by mediating the ubiquitination and subsequent degradation of proteins involved in mitochondrial fusion/fission such as Marf, Opa1 and fzo. This prevents the refusion of unhealthy mitochondria with the healthy mitochondrial network and/or initiates mitochondrial fragmentation facilitating their later engulfment by autophagosomes. Regulates motility of damaged mitochondria by phosphorylating Miro which likely promotes its park-dependent degradation by the proteasome; in motor neurons, this inhibits mitochondrial intracellular anterograde transport along the axons which probably increases the chance of the mitochondria being eliminated in the soma. The Pink1-park pathway is also involved in mitochondrial regeneration processes such as promoting mitochondrial biogenesis, activating localized mitochondrial repair, promoting selective turnover of mitochondrial proteins and initiating the mitochondrial import of endogenous proteins. Involved in mitochondrial biogenesis via the ubiquitination of transcriptional repressor Paris which leads to its subsequent proteasomal degradation and allows activation of the transcription factor srl. Promotes localized mitochondrial repair by activating the translation of specific nuclear-encoded mitochondrial RNAs (nc-mtRNAs) on the mitochondrial surface, including several key electron transport chain component nc-mtRNAs. This chain is E3 ubiquitin-protein ligase parkin, found in Drosophila melanogaster (Fruit fly).